Here is a 445-residue protein sequence, read N- to C-terminus: Tubulin beta-7 chain (445 aa).

GTP-binding residues include Q11, E69, S138, G142, T143, G144, N204, and N226. E69 contributes to the Mg(2+) binding site. Residues 421–445 form a disordered region; it reads EYQQYQDATAEDEEYEEEEEEEEET. Positions 429-445 are enriched in acidic residues; the sequence is TAEDEEYEEEEEEEEET.

This sequence belongs to the tubulin family. As to quaternary structure, dimer of alpha and beta chains. A typical microtubule is a hollow water-filled tube with an outer diameter of 25 nm and an inner diameter of 15 nM. Alpha-beta heterodimers associate head-to-tail to form protofilaments running lengthwise along the microtubule wall with the beta-tubulin subunit facing the microtubule plus end conferring a structural polarity. Microtubules usually have 13 protofilaments but different protofilament numbers can be found in some organisms and specialized cells. Mg(2+) serves as cofactor.

It localises to the cytoplasm. Its subcellular location is the cytoskeleton. In terms of biological role, tubulin is the major constituent of microtubules, a cylinder consisting of laterally associated linear protofilaments composed of alpha- and beta-tubulin heterodimers. Microtubules grow by the addition of GTP-tubulin dimers to the microtubule end, where a stabilizing cap forms. Below the cap, tubulin dimers are in GDP-bound state, owing to GTPase activity of alpha-tubulin. The protein is Tubulin beta-7 chain (TUBB7) of Zea mays (Maize).